We begin with the raw amino-acid sequence, 82 residues long: Sulfur carrier protein TusA (82 aa).

The active-site Cysteine persulfide intermediate is the C19.

It belongs to the sulfur carrier protein TusA family. In terms of assembly, interacts with IscS.

It localises to the cytoplasm. It functions in the pathway tRNA modification. Functionally, sulfur carrier protein involved in sulfur trafficking in the cell. Part of a sulfur-relay system required for 2-thiolation during synthesis of 2-thiouridine of the modified wobble base 5-methylaminomethyl-2-thiouridine (mnm(5)s(2)U) in tRNA. Interacts with IscS and stimulates its cysteine desulfurase activity. Accepts an activated sulfur from IscS, which is then transferred to TusD, and thus determines the direction of sulfur flow from IscS to 2-thiouridine formation. Also appears to be involved in sulfur transfer for the biosynthesis of molybdopterin. The polypeptide is Sulfur carrier protein TusA (Edwardsiella ictaluri (strain 93-146)).